Here is a 175-residue protein sequence, read N- to C-terminus: Transcriptional repressor NrdR (175 aa).

The segment at 3–34 is a zinc-finger region; it reads CPICQDTNSRVLESRSAESGKSIRRRRECMNC. An ATP-cone domain is found at 49-139; that stretch reads ITIIKRDGKK…VYRKFQGIRD (91 aa).

The protein belongs to the NrdR family. The cofactor is Zn(2+).

In terms of biological role, negatively regulates transcription of bacterial ribonucleotide reductase nrd genes and operons by binding to NrdR-boxes. This chain is Transcriptional repressor NrdR, found in Trichodesmium erythraeum (strain IMS101).